The primary structure comprises 264 residues: 3-methyl-2-oxobutanoate hydroxymethyltransferase (264 aa).

Residues D45 and D84 each coordinate Mg(2+). Residues 45–46 (DS), D84, and K112 contribute to the 3-methyl-2-oxobutanoate site. E114 is a binding site for Mg(2+). E181 (proton acceptor) is an active-site residue.

It belongs to the PanB family. In terms of assembly, homodecamer; pentamer of dimers. Requires Mg(2+) as cofactor.

Its subcellular location is the cytoplasm. It carries out the reaction 3-methyl-2-oxobutanoate + (6R)-5,10-methylene-5,6,7,8-tetrahydrofolate + H2O = 2-dehydropantoate + (6S)-5,6,7,8-tetrahydrofolate. It functions in the pathway cofactor biosynthesis; (R)-pantothenate biosynthesis; (R)-pantoate from 3-methyl-2-oxobutanoate: step 1/2. Functionally, catalyzes the reversible reaction in which hydroxymethyl group from 5,10-methylenetetrahydrofolate is transferred onto alpha-ketoisovalerate to form ketopantoate. This chain is 3-methyl-2-oxobutanoate hydroxymethyltransferase, found in Escherichia coli O81 (strain ED1a).